A 570-amino-acid chain; its full sequence is Peptidyl-prolyl cis-trans isomerase CYP63 (570 aa).

The region spanning F10–E174 is the PPIase cyclophilin-type domain. Positions A180–D570 are disordered. Basic and acidic residues predominate over residues V203–K219. Composition is skewed to low complexity over residues S229–D238 and E246–S259. The segment covering K262–P292 has biased composition (basic residues). Residues S297–S309 show a composition bias toward low complexity. The segment covering V323–K339 has biased composition (basic and acidic residues). S340 is modified (phosphoserine). The span at S340 to Q351 shows a compositional bias: basic residues. The segment covering N352–V365 has biased composition (low complexity). Basic and acidic residues-rich tracts occupy residues S387–V397 and S437–P467. Basic residues predominate over residues R468–T490. A compositionally biased stretch (basic and acidic residues) spans D495–S505. Over residues S509–Q523 the composition is skewed to basic residues. A compositionally biased stretch (low complexity) spans S546–H555.

The protein belongs to the cyclophilin-type PPIase family. Interacts with SNRNP35, RNU1, SCL28, SCL30, SR30 and SR34. The binding to SR34 is phosphorylation-dependent. Ubiquitous.

The protein localises to the nucleus. It is found in the nucleoplasm. Its subcellular location is the nucleus speckle. The enzyme catalyses [protein]-peptidylproline (omega=180) = [protein]-peptidylproline (omega=0). PPIases accelerate the folding of proteins. It catalyzes the cis-trans isomerization of proline imidic peptide bonds in oligopeptides. May be implicated in the folding, transport, and assembly of proteins. Probably involved in early steps of spliceosomal assembly. In Arabidopsis thaliana (Mouse-ear cress), this protein is Peptidyl-prolyl cis-trans isomerase CYP63 (CYP63).